The chain runs to 79 residues: MLVLSRKAGEAIRIMDDIEIKVLAVEGDQVKLGISAPKSVDVHRGEVYEAIQEENKHAAKPVSAEILQAFINHANKAST.

The protein belongs to the CsrA/RsmA family. Homodimer; the beta-strands of each monomer intercalate to form a hydrophobic core, while the alpha-helices form wings that extend away from the core.

It localises to the cytoplasm. A translational regulator that binds mRNA to regulate translation initiation and/or mRNA stability. Usually binds in the 5'-UTR at or near the Shine-Dalgarno sequence preventing ribosome-binding, thus repressing translation. Its main target seems to be the major flagellin gene, while its function is anatagonized by FliW. This is Translational regulator CsrA from Shouchella clausii (strain KSM-K16) (Alkalihalobacillus clausii).